Reading from the N-terminus, the 581-residue chain is Proline--tRNA ligase (581 aa).

The protein belongs to the class-II aminoacyl-tRNA synthetase family. ProS type 1 subfamily. In terms of assembly, homodimer.

It localises to the cytoplasm. It carries out the reaction tRNA(Pro) + L-proline + ATP = L-prolyl-tRNA(Pro) + AMP + diphosphate. In terms of biological role, catalyzes the attachment of proline to tRNA(Pro) in a two-step reaction: proline is first activated by ATP to form Pro-AMP and then transferred to the acceptor end of tRNA(Pro). As ProRS can inadvertently accommodate and process non-cognate amino acids such as alanine and cysteine, to avoid such errors it has two additional distinct editing activities against alanine. One activity is designated as 'pretransfer' editing and involves the tRNA(Pro)-independent hydrolysis of activated Ala-AMP. The other activity is designated 'posttransfer' editing and involves deacylation of mischarged Ala-tRNA(Pro). The misacylated Cys-tRNA(Pro) is not edited by ProRS. This chain is Proline--tRNA ligase, found in Rhodococcus opacus (strain B4).